A 142-amino-acid polypeptide reads, in one-letter code: Myosin-2 essential light chain (142 aa).

EF-hand domains lie at 2–37 (DDLA…LGQN) and 75–110 (HTVE…LGER).

In terms of assembly, myosin is a hexamer of 2 heavy chains and 4 light chains (two regulatory light chains and two essential light chains).

The protein localises to the cytoplasm. The protein resides in the cytoskeleton. Its function is as follows. Required for cytokinesis and embryo elongation. May regulate myosin II complex formation and/or the association of myosin with actin. May be involved in the organization of mlc-4 and nmy-2 into bundles. This Caenorhabditis elegans protein is Myosin-2 essential light chain.